Here is a 202-residue protein sequence, read N- to C-terminus: MTTTVGIVVKDGVVLATDKRVTAGYYIAHKKGEKLWKIDDHVAATMSGGVADLQNILSFLTVRAREYKTQFRRPIPIRALVNYMSLILFYSRPYVYVVHSIIGGVDEEEGAVMYMVDWLGTVTKEKYVATGSGSPYAKGVLEVGYRGDLTVEEAVDLAINAIKAAIRNDPGSGEGIDVVTITKRDGFKRIFTTQQKLLIPEI.

A propeptide (removed in mature form; by autocatalysis) is located at residue M1. T2 (nucleophile) is an active-site residue.

This sequence belongs to the peptidase T1B family. As to quaternary structure, the 20S proteasome core is composed of 14 alpha and 14 beta subunits that assemble into four stacked heptameric rings, resulting in a barrel-shaped structure. The two inner rings, each composed of seven catalytic beta subunits, are sandwiched by two outer rings, each composed of seven alpha subunits. The catalytic chamber with the active sites is on the inside of the barrel. Has a gated structure, the ends of the cylinder being occluded by the N-termini of the alpha-subunits. Is capped at one or both ends by the proteasome regulatory ATPase, PAN.

Its subcellular location is the cytoplasm. The enzyme catalyses Cleavage of peptide bonds with very broad specificity.. The formation of the proteasomal ATPase PAN-20S proteasome complex, via the docking of the C-termini of PAN into the intersubunit pockets in the alpha-rings, triggers opening of the gate for substrate entry. Interconversion between the open-gate and close-gate conformations leads to a dynamic regulation of the 20S proteasome proteolysis activity. Functionally, component of the proteasome core, a large protease complex with broad specificity involved in protein degradation. The polypeptide is Proteasome subunit beta 1 (Pyrobaculum arsenaticum (strain DSM 13514 / JCM 11321 / PZ6)).